The primary structure comprises 183 residues: Potassium-transporting ATPase KdpC subunit (183 aa).

A helical membrane pass occupies residues 10 to 30 (LTVFTLILFAVIYPLAIYGIA).

Belongs to the KdpC family. The system is composed of three essential subunits: KdpA, KdpB and KdpC.

It is found in the cell inner membrane. Part of the high-affinity ATP-driven potassium transport (or Kdp) system, which catalyzes the hydrolysis of ATP coupled with the electrogenic transport of potassium into the cytoplasm. This subunit acts as a catalytic chaperone that increases the ATP-binding affinity of the ATP-hydrolyzing subunit KdpB by the formation of a transient KdpB/KdpC/ATP ternary complex. This is Potassium-transporting ATPase KdpC subunit from Flavobacterium johnsoniae (strain ATCC 17061 / DSM 2064 / JCM 8514 / BCRC 14874 / CCUG 350202 / NBRC 14942 / NCIMB 11054 / UW101) (Cytophaga johnsonae).